A 490-amino-acid polypeptide reads, in one-letter code: MKEIDELTIKEYGVDSRILMERAGISVVLAMEEELGNLSDYRFLVLCGGGNNGGDGFVVARNLLGVVKDVLVVFLGKKKTPDCEYNYGLYKKFGGKVVEQFEPSILNEFDVVVDAIFGTGLRGEITGEYAEIINLVNKSGKVVVSVDVPSGIDSNTGKVLRTAVKADLTVTFGVPKIGHILFPGRDLTGKLKVANIGHPVHLINSINRYVITREMVRSLLPERPRDSHKGTYGKVLIIAGSRLYSGAPVLSGMGSLKVGTGLVKLAVPFPQNLIATSRFPELISVPIDTEKGFFSLQNLQECLELSKDVDVVAIGPGLGNNEHVREFVNEFLKTLEKPAVIDADAINVLDTSVLKERKSPAVLTPHPGEMARLVKKTVGDVKYNYELAEEFAKENDCVLVLKSATTIVTDGEKTLFNITGNTGLSKGGSGDVLTGMIAGFIAQGLSPLEASTVSVYLHGFAAELFEQDERGLTASELLRLIPEAIRRLKE.

The YjeF N-terminal domain maps to 1–204 (MKEIDELTIK…NIGHPVHLIN (204 aa)). Residues 1–204 (MKEIDELTIK…NIGHPVHLIN (204 aa)) are NAD(P)H-hydrate epimerase. The NADPHX 1; for epimerase activity stretch occupies residues 51–55 (NNGGD). K(+) contacts are provided by Asn-52 and Asp-114. The tract at residues 118-124 (GTGLRGE) is NADPHX 1; for epimerase activity. Positions 129 and 147 each coordinate (6S)-NADPHX. Ser-150 contacts K(+). The 277-residue stretch at 212–488 (TREMVRSLLP…RLIPEAIRRL (277 aa)) folds into the YjeF C-terminal domain. Residues 212–490 (TREMVRSLLP…IPEAIRRLKE (279 aa)) are ADP-dependent (S)-NAD(P)H-hydrate dehydratase. Position 317 (Gly-317) interacts with (6S)-NADPHX. The interval 366–372 (HPGEMAR) is NADPHX 2; for dehydratase activity. ADP is bound by residues 402–406 (KSATT) and 421–430 (NTGLSKGGSG). Residue Asp-431 participates in (6S)-NADPHX binding.

In the N-terminal section; belongs to the NnrE/AIBP family. The protein in the C-terminal section; belongs to the NnrD/CARKD family. It depends on K(+) as a cofactor.

It catalyses the reaction (6S)-NADHX + ADP = AMP + phosphate + NADH + H(+). The enzyme catalyses (6S)-NADPHX + ADP = AMP + phosphate + NADPH + H(+). The catalysed reaction is (6R)-NADHX = (6S)-NADHX. It carries out the reaction (6R)-NADPHX = (6S)-NADPHX. Bifunctional enzyme that catalyzes the epimerization of the S- and R-forms of NAD(P)HX and the dehydration of the S-form of NAD(P)HX at the expense of ADP, which is converted to AMP. This allows the repair of both epimers of NAD(P)HX, a damaged form of NAD(P)H that is a result of enzymatic or heat-dependent hydration. The chain is Bifunctional NAD(P)H-hydrate repair enzyme Nnr (nnr) from Thermotoga maritima (strain ATCC 43589 / DSM 3109 / JCM 10099 / NBRC 100826 / MSB8).